A 212-amino-acid polypeptide reads, in one-letter code: ATP-dependent Clp protease proteolytic subunit (212 aa).

Catalysis depends on serine 109, which acts as the Nucleophile. Histidine 134 is a catalytic residue.

This sequence belongs to the peptidase S14 family. As to quaternary structure, fourteen ClpP subunits assemble into 2 heptameric rings which stack back to back to give a disk-like structure with a central cavity, resembling the structure of eukaryotic proteasomes.

It is found in the cytoplasm. It carries out the reaction Hydrolysis of proteins to small peptides in the presence of ATP and magnesium. alpha-casein is the usual test substrate. In the absence of ATP, only oligopeptides shorter than five residues are hydrolyzed (such as succinyl-Leu-Tyr-|-NHMec, and Leu-Tyr-Leu-|-Tyr-Trp, in which cleavage of the -Tyr-|-Leu- and -Tyr-|-Trp bonds also occurs).. Its function is as follows. Cleaves peptides in various proteins in a process that requires ATP hydrolysis. Has a chymotrypsin-like activity. Plays a major role in the degradation of misfolded proteins. In Bdellovibrio bacteriovorus (strain ATCC 15356 / DSM 50701 / NCIMB 9529 / HD100), this protein is ATP-dependent Clp protease proteolytic subunit.